Here is a 584-residue protein sequence, read N- to C-terminus: Endogenous retrovirus group FC1 Env polyprotein (584 aa).

An N-terminal signal peptide occupies residues 1–22 (MARPSPLCLLLLLTLLPPIVPS). At 23-514 (NSLLTEPPFR…NYGGGWWQSP (492 aa)) the chain is on the extracellular side. 2 N-linked (GlcNAc...) asparagine glycosylation sites follow: Asn69 and Asn247. The short motif at 251–254 (CFLC) is the CXXC element. N-linked (GlcNAc...) asparagine glycosylation is found at Asn272, Asn276, Asn308, Asn313, Asn322, Asn334, Asn342, and Asn346. The tract at residues 388 to 413 (PLVIGVSLTSSLVASGLGTGAIVHFI) is fusion peptide. The CKS-17 signature appears at 449–465 (MQNRRALDLLTADKGGT). Cysteines 466 and 473 form a disulfide. A CX6CC motif is present at residues 466-474 (CMFLGEECC). N-linked (GlcNAc...) asparagine glycosylation is present at Asn478. Residues 515 to 540 (LTTWIIPFISPILIICLLLLIAPCVL) form a helical membrane-spanning segment. The Cytoplasmic segment spans residues 541 to 584 (KFIKNRISEVSRVTVNQMLLHPYSRLPTSEDHYDVALTQQEAAR).

It belongs to the gamma type-C retroviral envelope protein family. HERV class-I F(c)1 env subfamily. In terms of assembly, the surface (SU) and transmembrane (TM) proteins form a heterodimer. SU and TM are attached by noncovalent interactions or by a labile interchain disulfide bond. In terms of processing, specific enzymatic cleavages in vivo yield the mature SU and TM proteins. The CXXC motif is highly conserved across a broad range of retroviral envelope proteins. It is thought to participate in the formation of a labile disulfide bond possibly with the CX6CC motif present in the transmembrane protein.

It is found in the virion. The protein resides in the cell membrane. Retroviral envelope proteins mediate receptor recognition and membrane fusion during early infection. Endogenous envelope proteins may have kept, lost or modified their original function during evolution. This endogenous envelope protein has lost its original fusogenic properties. In terms of biological role, SU mediates receptor recognition. Its function is as follows. TM anchors the envelope heterodimer to the viral membrane through one transmembrane domain. The other hydrophobic domain, called fusion peptide, mediates fusion of the viral membrane with the target cell membrane. This Pan troglodytes (Chimpanzee) protein is Endogenous retrovirus group FC1 Env polyprotein (ERVFC1).